The sequence spans 644 residues: Tubulin--tyrosine ligase-like protein 12 (644 aa).

Over residues 1–13 (MEAERGPERRPAE) the composition is skewed to basic and acidic residues. A disordered region spans residues 1–25 (MEAERGPERRPAERSSPGQTPEEGA). Residues 300-644 (PHGHIFKVYT…PGGCHVTCLV (345 aa)) enclose the TTL domain. ATP contacts are provided by residues 450-453 (SKYI), Lys-468, and Asp-470.

Belongs to the tubulin--tyrosine ligase family. As to quaternary structure, interacts with MAVS; the interaction prevents MAVS binding to TBK1 and IKBKE. Interacts (via N-terminus) with TBK1 (via protein kinase domain). Interacts (via TTL domain) with IKBKE (via protein kinase domain). Interacts with tubulin alpha. Interacts with histone H3 and histone H4 (when trimethylated at 'Lys-20' (H4K20me3)). Interacts with CBX3. In terms of tissue distribution, expressed in the basal layer of prostate and endothelial cells. Increased expression in prostatic intraepithelial neoplasia and metastatic lesions.

Its subcellular location is the cytoplasm. It localises to the midbody. The protein resides in the cytoskeleton. It is found in the microtubule organizing center. The protein localises to the centrosome. Its subcellular location is the spindle. It localises to the nucleus. Functionally, negatively regulates post-translational modifications of tubulin, including detyrosination of the C-terminus and polyglutamylation of glutamate residues. Also, indirectly promotes histone H4 trimethylation at 'Lys-20' (H4K20me3). Probably by controlling tubulin and/or histone H4 post-translational modifications, plays a role in mitosis and in maintaining chromosome number stability. During RNA virus-mediated infection, acts as a negative regulator of the RIG-I pathway by preventing MAVS binding to TBK1 and IKBKE. In Homo sapiens (Human), this protein is Tubulin--tyrosine ligase-like protein 12 (TTLL12).